We begin with the raw amino-acid sequence, 626 residues long: Interferon-induced GTP-binding protein MxC (626 aa).

A Dynamin-type G domain is found at 40–313 (DLNLPAIAVI…LVEHIAKNVP (274 aa)). The G1 motif stretch occupies residues 50 to 57 (GDQSSGKS). GTP is bound at residue 50–57 (GDQSSGKS). The tract at residues 75–77 (VTR) is G2 motif. Residues 151–154 (DLPG) form a G3 motif region. Residues 151–155 (DLPGI) and 220–223 (TKPD) contribute to the GTP site. Residues 220–223 (TKPD) are G4 motif. A G5 motif region spans residues 252–255 (KCRG). The 91-residue stretch at 534–624 (LRETAFHLTS…ALPKVVHSAN (91 aa)) folds into the GED domain.

The protein belongs to the TRAFAC class dynamin-like GTPase superfamily. Dynamin/Fzo/YdjA family.

The protein localises to the cytoplasm. The sequence is that of Interferon-induced GTP-binding protein MxC (mxc) from Danio rerio (Zebrafish).